The primary structure comprises 441 residues: UBX domain-containing protein 6 (441 aa).

Positions 1 to 10 are mediates interaction with LMAN1; it reads MKKFFQEFKA. Residue lysine 2 is modified to N-acetylalanine. Disordered stretches follow at residues 13–79 and 87–106; these read KFKS…QDTI and LQAE…NVVS. Residues 22–36 are compositionally biased toward basic and acidic residues; it reads KLKESVGEKAHKEKP. The VCP/p97-interacting motif (VIM) stretch occupies residues 51–63; it reads EAQMAAAAALARL. A compositionally biased stretch (low complexity) spans 52–61; sequence AQMAAAAALA. Serine 96 is subject to Phosphoserine. The region spanning 175–244 is the PUB domain; the sequence is VDTIAKYLDN…DPEEFYVLSE (70 aa). The region spanning 332 to 408 is the UBX domain; it reads RKYNYTLLRV…GLVPSALLTF (77 aa).

Interacts with VCP through the PUB domain (via C-terminus) and VIM motif (via N-terminus); the interaction is direct. Forms a ternary complex with CAV1 and VCP. Interacts with SYVN1. Interacts with HERPUD1. Interacts with VCPKMT. May interact with DERL1. Interacts with PLAA, VCP and YOD1; may form a complex involved in macroautophagy. Interacts with LMAN1. As to expression, enhanced expression in testis.

It localises to the cytoplasm. It is found in the cytosol. Its subcellular location is the membrane. The protein resides in the nucleus. The protein localises to the cytoskeleton. It localises to the microtubule organizing center. It is found in the centrosome. Its subcellular location is the early endosome membrane. The protein resides in the late endosome membrane. The protein localises to the lysosome membrane. May negatively regulate the ATPase activity of VCP, an ATP-driven segregase that associates with different cofactors to control a wide variety of cellular processes. As a cofactor of VCP, it may play a role in the transport of CAV1 to lysosomes for degradation. It may also play a role in endoplasmic reticulum-associated degradation (ERAD) of misfolded proteins. Together with VCP and other cofactors, it may play a role in macroautophagy, regulating for instance the clearance of damaged lysosomes. The chain is UBX domain-containing protein 6 from Homo sapiens (Human).